The following is a 345-amino-acid chain: Tropomodulin-4 (345 aa).

Residues asparagine 42–leucine 63 are disordered.

This sequence belongs to the tropomodulin family. As to quaternary structure, binds to the N-terminus of tropomyosin and to actin. In terms of tissue distribution, highly expressed in skeletal muscle.

Its subcellular location is the cytoplasm. It localises to the cytoskeleton. Its function is as follows. Blocks the elongation and depolymerization of the actin filaments at the pointed end. The Tmod/TM complex contributes to the formation of the short actin protofilament, which in turn defines the geometry of the membrane skeleton. This Homo sapiens (Human) protein is Tropomodulin-4 (TMOD4).